The chain runs to 375 residues: Acetylornithine aminotransferase (375 aa).

Residues 93 to 94 and phenylalanine 120 contribute to the pyridoxal 5'-phosphate site; that span reads GT. Position 123 (arginine 123) interacts with N(2)-acetyl-L-ornithine. Position 205-208 (205-208) interacts with pyridoxal 5'-phosphate; it reads DEVQ. Lysine 234 carries the post-translational modification N6-(pyridoxal phosphate)lysine. Threonine 262 lines the N(2)-acetyl-L-ornithine pocket. Threonine 263 contributes to the pyridoxal 5'-phosphate binding site.

The protein belongs to the class-III pyridoxal-phosphate-dependent aminotransferase family. ArgD subfamily. In terms of assembly, homodimer. Requires pyridoxal 5'-phosphate as cofactor.

Its subcellular location is the cytoplasm. It catalyses the reaction N(2)-acetyl-L-ornithine + 2-oxoglutarate = N-acetyl-L-glutamate 5-semialdehyde + L-glutamate. The protein operates within amino-acid biosynthesis; L-arginine biosynthesis; N(2)-acetyl-L-ornithine from L-glutamate: step 4/4. The chain is Acetylornithine aminotransferase from Staphylococcus epidermidis (strain ATCC 12228 / FDA PCI 1200).